A 207-amino-acid polypeptide reads, in one-letter code: SPRY domain-containing protein 4 (207 aa).

The B30.2/SPRY domain maps to 12–206 (CRWGAKRLGV…THSGLEVPEG (195 aa)). Residues Lys53 and Lys130 each carry the N6-acetyllysine modification. Lys139 is subject to N6-succinyllysine.

This is SPRY domain-containing protein 4 (SPRYD4) from Homo sapiens (Human).